A 258-amino-acid chain; its full sequence is MRIDCLPALQDNYIFLLVDVEQRQAAVVDPAEAEPVLAALQAEGLTLTAILNTHHHGDHVGGNRRLLRQFPEAAVSASAVDRDRIPGQTVLLEAGDRLQICGQTAEVLFVPGHTRGHIAYYFPEVAEGNPRGALFCGDTLFAGGCGRLFEGTPAQMLDSLQQLRSLPDDTAIYCAHEYTLNNLRFALTVEPDNFDLQQRYQAVAIARQQGQATIPSRLDIEKATNPFLRWDQAALQAAVSSQDPVQTLARLRSRKDQF.

Positions 54, 56, 58, 59, 113, 138, and 176 each coordinate Zn(2+).

It belongs to the metallo-beta-lactamase superfamily. Glyoxalase II family. As to quaternary structure, monomer. It depends on Zn(2+) as a cofactor.

It carries out the reaction an S-(2-hydroxyacyl)glutathione + H2O = a 2-hydroxy carboxylate + glutathione + H(+). It functions in the pathway secondary metabolite metabolism; methylglyoxal degradation; (R)-lactate from methylglyoxal: step 2/2. Its function is as follows. Thiolesterase that catalyzes the hydrolysis of S-D-lactoyl-glutathione to form glutathione and D-lactic acid. The chain is Hydroxyacylglutathione hydrolase from Synechococcus sp. (strain ATCC 27144 / PCC 6301 / SAUG 1402/1) (Anacystis nidulans).